The chain runs to 501 residues: 2-phosphoxylose phosphatase 1 (501 aa).

Residues 1–6 (MLLRNR) are Cytoplasmic-facing. The helical; Signal-anchor for type II membrane protein transmembrane segment at 7–27 (FLLLLALAGLLAFLSLSLQFF) threads the bilayer. The Lumenal segment spans residues 28-501 (SRWLPVSLQL…YYDACHQRLF (474 aa)). The Nucleophile role is filled by His120. 2 N-linked (GlcNAc...) asparagine glycosylation sites follow: Asn328 and Asn377. The active-site Proton donor is Asp402. A glycan (N-linked (GlcNAc...) asparagine) is linked at Asn488.

It belongs to the histidine acid phosphatase family.

It localises to the golgi apparatus membrane. It carries out the reaction 3-O-[beta-D-GlcA-(1-&gt;3)-beta-D-Gal-(1-&gt;3)-beta-D-Gal-(1-&gt;4)-beta-D-2-O-P-Xyl]-L-seryl-[protein] + H2O = 3-O-(beta-D-GlcA-(1-&gt;3)-beta-D-Gal-(1-&gt;3)-beta-D-Gal-(1-&gt;4)-beta-D-Xyl)-L-seryl-[protein] + phosphate. Functionally, responsible for the 2-O-dephosphorylation of xylose in the glycosaminoglycan-protein linkage region of proteoglycans thereby regulating the amount of mature glycosaminoglycan (GAG) chains. Sulfated glycosaminoglycans (GAGs), including heparan sulfate and chondroitin sulfate, are synthesized on the so-called common GAG-protein linkage region (GlcUAbeta1-3Galbeta1-3Galbeta1-4Xylbeta1-O-Ser) of core proteins, which is formed by the stepwise addition of monosaccharide residues by the respective specific glycosyltransferases. Xylose 2-O-dephosphorylation during completion of linkage region formation is a prerequisite for the initiation and efficient elongation of the repeating disaccharide region of GAG chains. The sequence is that of 2-phosphoxylose phosphatase 1 from Xenopus tropicalis (Western clawed frog).